We begin with the raw amino-acid sequence, 297 residues long: Formiminotransferase cyclodeaminase-like protein (297 aa).

A formiminotransferase N-subdomain region spans residues 2-196; sequence LREMLGCCKV…GVVAVGACGW (195 aa). Residue H89 is the For formimidoyltransferase activity of the active site. 178-187 provides a ligand contact to folate; sequence GPQEVSKAKG.

It belongs to the formiminotransferase family. In terms of tissue distribution, expressed constitutively in roots, stems, leaves and flowers.

The protein localises to the golgi apparatus. The protein resides in the trans-Golgi network. It carries out the reaction (6S)-5-formyl-5,6,7,8-tetrahydrofolate + L-glutamate = N-formyl-L-glutamate + (6S)-5,6,7,8-tetrahydrofolate + H(+). The catalysed reaction is 5-formimidoyltetrahydrofolate + L-glutamate = N-formimidoyl-L-glutamate + (6S)-5,6,7,8-tetrahydrofolate. Its pathway is one-carbon metabolism; tetrahydrofolate interconversion. Functionally, involved in the regulation of root growth. May regulate sorting and/or transportation of trans-Golgi network (TGN) vesicles in root cap peripheral cells, thus influencing the extracellular secretion of mucilage components in the root cap. This is Formiminotransferase cyclodeaminase-like protein from Arabidopsis thaliana (Mouse-ear cress).